Here is a 655-residue protein sequence, read N- to C-terminus: Serine/threonine-protein kinase SKM1 (655 aa).

The PH domain maps to 3-118 (GVKKEGWISY…WLDAIFAKCP (116 aa)). In terms of domain architecture, CRIB spans 123-136 (VSSPTNFTHKVHVG). 2 stretches are compositionally biased toward basic and acidic residues: residues 265-276 (EEGRVHVSKEST) and 318-327 (KNHDSKTKWH). The disordered stretch occupies residues 265–327 (EEGRVHVSKE…KNHDSKTKWH (63 aa)). The Protein kinase domain occupies 360 to 639 (FQLVEKAGQG…VRKLLTFEFL (280 aa)). Residues 366–374 (AGQGASGAV) and Lys-406 each bind ATP. The Proton acceptor role is filled by Asp-507.

It belongs to the protein kinase superfamily. STE Ser/Thr protein kinase family. STE20 subfamily.

The enzyme catalyses L-seryl-[protein] + ATP = O-phospho-L-seryl-[protein] + ADP + H(+). It carries out the reaction L-threonyl-[protein] + ATP = O-phospho-L-threonyl-[protein] + ADP + H(+). Its function is as follows. May be involved in cellular signaling or cytoskeletal functions. May play a role in morphogenetic control. This Saccharomyces cerevisiae (strain ATCC 204508 / S288c) (Baker's yeast) protein is Serine/threonine-protein kinase SKM1 (SKM1).